The chain runs to 364 residues: tRNA-specific 2-thiouridylase MnmA 2 (364 aa).

ATP-binding positions include 10–17 (GMSGGVDS) and M36. C106 (nucleophile) is an active-site residue. The cysteines at positions 106 and 204 are disulfide-linked. Position 130 (G130) interacts with ATP. An interaction with tRNA region spans residues 154–156 (KDQ). Residue C204 is the Cysteine persulfide intermediate of the active site. Residues 310-311 (RY) form an interaction with tRNA region.

It belongs to the MnmA/TRMU family.

It is found in the cytoplasm. The catalysed reaction is S-sulfanyl-L-cysteinyl-[protein] + uridine(34) in tRNA + AH2 + ATP = 2-thiouridine(34) in tRNA + L-cysteinyl-[protein] + A + AMP + diphosphate + H(+). Functionally, catalyzes the 2-thiolation of uridine at the wobble position (U34) of tRNA, leading to the formation of s(2)U34. The polypeptide is tRNA-specific 2-thiouridylase MnmA 2 (Thermoanaerobacter pseudethanolicus (strain ATCC 33223 / 39E) (Clostridium thermohydrosulfuricum)).